The following is a 222-amino-acid chain: MTRLVLGSASPGRLKVLRDAGIEPLVIASHVDEDVVIAALGPDAVPSDVVCVLAAAKAAQVATTLTGTQRIVAADCVVVACDSMLYIEGRLLGKPASIDEAREQWRSMAGRAGQLYTGHGVIRLQDNKTVYRAAETAITTVYFGTPSASDLEAYLASGESLRVAGGFTLDGLGGWFIDGVQGNPSNVIGLSLPLLRSLVQRCGLSVAALWAGNAGGPAHKQQ.

Aspartate 82 (proton acceptor) is an active-site residue.

It belongs to the Maf family. A divalent metal cation is required as a cofactor.

It localises to the cytoplasm. It carries out the reaction a ribonucleoside 5'-triphosphate + H2O = a ribonucleoside 5'-phosphate + diphosphate + H(+). The catalysed reaction is a 2'-deoxyribonucleoside 5'-triphosphate + H2O = a 2'-deoxyribonucleoside 5'-phosphate + diphosphate + H(+). In terms of biological role, nucleoside triphosphate pyrophosphatase. May have a dual role in cell division arrest and in preventing the incorporation of modified nucleotides into cellular nucleic acids. This Mycobacterium tuberculosis (strain ATCC 25177 / H37Ra) protein is Nucleoside triphosphate pyrophosphatase.